The chain runs to 740 residues: E3 ubiquitin-protein ligase TRIM9 (740 aa).

The RING-type; degenerate zinc-finger motif lies at 7-30 (CPTCKQLYANPVLLPCFHALCLGC). Residues 64-73 (GNGGGAGGGA) show a composition bias toward gly residues. Positions 64–114 (GNGGGAGGGAAAPVTNPNGPGTRHSSHSSAASTASSNTGSESVTSDQDQSD) are disordered. The segment covering 74–105 (AAPVTNPNGPGTRHSSHSSAASTASSNTGSES) has biased composition (low complexity). Residues 195–244 (REALRCQMCETDPKVASLICEQCEIRYCDACRELTHPARGPLAKHTLVKP) form a B box-type 1; atypical zinc finger. 8 residues coordinate Zn(2+): C200, C203, C225, H230, C255, H258, C277, and H283. Residues 250 to 291 (QRESVCGEHEETLSQYCLSCKAPACGLCIGELRHQAHDVQSI) form a B box-type 2 zinc finger. Positions 294–324 (TCKAQKTELSHNLQQLSEKARSTTEFIQRLK) form a coiled coil. A COS domain is found at 399 to 459 (LKETDSAAFL…ARAIDNLNFI (61 aa)). Residues 474-567 (APMTPTILPS…ELIGLQTAEV (94 aa)) enclose the Fibronectin type-III domain. The region spanning 549–736 (NSAGEGEYSE…TMHTAMDAPK (188 aa)) is the B30.2/SPRY domain.

Belongs to the TRIM/RBCC family. In terms of assembly, interacts (via fibronectin type-III domain) with pico. Interacts (via SPRY domain) with netrin receptor fra.

Its subcellular location is the cell projection. The protein resides in the axon. It localises to the perikaryon. It catalyses the reaction S-ubiquitinyl-[E2 ubiquitin-conjugating enzyme]-L-cysteine + [acceptor protein]-L-lysine = [E2 ubiquitin-conjugating enzyme]-L-cysteine + N(6)-ubiquitinyl-[acceptor protein]-L-lysine.. It participates in protein modification; protein ubiquitination. Its function is as follows. E3 ubiquitin-protein ligase activity. During embryonic and larval development, regulates the pattern of axonal projections of class IV nociceptive sensory neurons (C4da) downstream of netrin receptor fra. Regulates fine-scale topography of C4da axon terminals upon neuronal activity. During eye development, consolidates the attachment of R8 photoreceptor growth cones to the target medulla layer, probably downstream of fra. The chain is E3 ubiquitin-protein ligase TRIM9 from Drosophila melanogaster (Fruit fly).